The sequence spans 324 residues: Glycerol-3-phosphate dehydrogenase [NAD(P)+] (324 aa).

The NADPH site is built by W15, R35, and K101. Sn-glycerol 3-phosphate contacts are provided by K101 and G129. A133 provides a ligand contact to NADPH. K184, D237, S247, R248, and N249 together coordinate sn-glycerol 3-phosphate. Residue K184 is the Proton acceptor of the active site. R248 is a binding site for NADPH. The NADPH site is built by V272 and E274.

The protein belongs to the NAD-dependent glycerol-3-phosphate dehydrogenase family.

The protein resides in the cytoplasm. The catalysed reaction is sn-glycerol 3-phosphate + NAD(+) = dihydroxyacetone phosphate + NADH + H(+). It catalyses the reaction sn-glycerol 3-phosphate + NADP(+) = dihydroxyacetone phosphate + NADPH + H(+). It participates in membrane lipid metabolism; glycerophospholipid metabolism. Its function is as follows. Catalyzes the reduction of the glycolytic intermediate dihydroxyacetone phosphate (DHAP) to sn-glycerol 3-phosphate (G3P), the key precursor for phospholipid synthesis. This chain is Glycerol-3-phosphate dehydrogenase [NAD(P)+], found in Gluconobacter oxydans (strain 621H) (Gluconobacter suboxydans).